The primary structure comprises 315 residues: Aspartate carbamoyltransferase catalytic subunit (315 aa).

The carbamoyl phosphate site is built by R65 and T66. K93 lines the L-aspartate pocket. Positions 115, 145, and 148 each coordinate carbamoyl phosphate. Residues R179 and R234 each coordinate L-aspartate. Residues G275 and P276 each coordinate carbamoyl phosphate.

It belongs to the aspartate/ornithine carbamoyltransferase superfamily. ATCase family. As to quaternary structure, heterododecamer (2C3:3R2) of six catalytic PyrB chains organized as two trimers (C3), and six regulatory PyrI chains organized as three dimers (R2).

It carries out the reaction carbamoyl phosphate + L-aspartate = N-carbamoyl-L-aspartate + phosphate + H(+). It functions in the pathway pyrimidine metabolism; UMP biosynthesis via de novo pathway; (S)-dihydroorotate from bicarbonate: step 2/3. Its function is as follows. Catalyzes the condensation of carbamoyl phosphate and aspartate to form carbamoyl aspartate and inorganic phosphate, the committed step in the de novo pyrimidine nucleotide biosynthesis pathway. The sequence is that of Aspartate carbamoyltransferase catalytic subunit from Xanthomonas euvesicatoria pv. vesicatoria (strain 85-10) (Xanthomonas campestris pv. vesicatoria).